Reading from the N-terminus, the 154-residue chain is Ubiquitin-like protein 4A (154 aa).

The Ubiquitin-like domain occupies 1 to 76 (MILTVKPLQG…LNLVVRPAGE (76 aa)).

As to quaternary structure, component of the bag6/bat3 complex.

It localises to the cytoplasm. Its subcellular location is the cytosol. The protein resides in the nucleus. Functionally, as part of a cytosolic protein quality control complex, the bag6/bat3 complex, maintains misfolded and hydrophobic patches-containing proteins in a soluble state and participates in their proper delivery to the endoplasmic reticulum or alternatively can promote their sorting to the proteasome where they undergo degradation. The bag6/bat3 complex is involved in the post-translational delivery of tail-anchored/type II transmembrane proteins to the endoplasmic reticulum membrane. Similarly, the bag6/bat3 complex also functions as a sorting platform for proteins of the secretory pathway that are mislocalized to the cytosol either delivering them to the proteasome for degradation or to the endoplasmic reticulum. The bag6/bat3 complex also plays a role in the endoplasmic reticulum-associated degradation (ERAD), a quality control mechanism that eliminates unwanted proteins of the endoplasmic reticulum through their retrotranslocation to the cytosol and their targeting to the proteasome. It maintains these retrotranslocated proteins in an unfolded yet soluble state condition in the cytosol to ensure their proper delivery to the proteasome. The polypeptide is Ubiquitin-like protein 4A (ubl4a) (Esox lucius (Northern pike)).